The following is a 357-amino-acid chain: 3-isopropylmalate dehydrogenase (357 aa).

Gly76–Glu89 contacts NAD(+). 4 residues coordinate substrate: Arg96, Arg106, Arg134, and Asp224. Mg(2+) contacts are provided by Asp224, Asp248, and Asp252. Gly282–Asn294 lines the NAD(+) pocket.

Belongs to the isocitrate and isopropylmalate dehydrogenases family. LeuB type 1 subfamily. In terms of assembly, homodimer. Requires Mg(2+) as cofactor. The cofactor is Mn(2+).

The protein localises to the cytoplasm. The enzyme catalyses (2R,3S)-3-isopropylmalate + NAD(+) = 4-methyl-2-oxopentanoate + CO2 + NADH. Its pathway is amino-acid biosynthesis; L-leucine biosynthesis; L-leucine from 3-methyl-2-oxobutanoate: step 3/4. Functionally, catalyzes the oxidation of 3-carboxy-2-hydroxy-4-methylpentanoate (3-isopropylmalate) to 3-carboxy-4-methyl-2-oxopentanoate. The product decarboxylates to 4-methyl-2 oxopentanoate. This chain is 3-isopropylmalate dehydrogenase, found in Xanthomonas euvesicatoria pv. vesicatoria (strain 85-10) (Xanthomonas campestris pv. vesicatoria).